The following is a 143-amino-acid chain: Large ribosomal subunit protein uL11 (143 aa).

Belongs to the universal ribosomal protein uL11 family. As to quaternary structure, part of the ribosomal stalk of the 50S ribosomal subunit. Interacts with L10 and the large rRNA to form the base of the stalk. L10 forms an elongated spine to which 2 L12 dimers bind in a sequential fashion forming a pentameric L10(L12)2(L12)2 complex. One or more lysine residues are methylated.

Functionally, forms part of the ribosomal stalk which helps the ribosome interact with GTP-bound translation factors. The chain is Large ribosomal subunit protein uL11 from Agrobacterium fabrum (strain C58 / ATCC 33970) (Agrobacterium tumefaciens (strain C58)).